The chain runs to 490 residues: Velvet complex subunit 2 (490 aa).

Disordered regions lie at residues 23–148 (LYHH…ESQQ) and 295–316 (YQTQ…TYGP). Basic residues predominate over residues 54–70 (PPSHHFQLHPGHGHHQQ). The segment covering 112 to 131 (AAEHRDHPQHALDEPSRSHD) has biased composition (basic and acidic residues). One can recognise a Velvet domain in the interval 164–474 (ATGRRYHLDV…AAQGIKIPIR (311 aa)). The span at 295-313 (YQTQPTYSQGSSAYPSNGT) shows a compositional bias: polar residues.

The protein belongs to the velvet family. VelB subfamily. Component of the heterotrimeric velvet complex composed of LAE1, VEL1 and VEL2; VEL1 acting as a bridging protein between LAE1 and VEL2. Forms a heterodimeric complex with VOS1; the formation of the VEL2-VOS1 complex is light-dependent.

It localises to the nucleus. The protein resides in the cytoplasm. Component of the velvet transcription factor complex that controls sexual/asexual developmental ratio in response to light, promoting sexual development in the darkness while stimulating asexual sporulation under illumination. The velvet complex acts as a global regulator for secondary metabolite gene expression. Component of the VEL2-VOS1 heterodimeric complex that plays a dual role in activating genes associated with spore maturation and repressing certain development-associated genes. The VEL2-VOS1 complex binds DNA through the DNA-binding domain of VOS1 that recognizes an 11-nucleotide consensus sequence 5'-CTGGCCGCGGC-3' consisting of two motifs in the promoters of key developmental regulatory genes. Regulates expression of cellulase-encoding genes such as the cellobiohydrolase-encoding genes cbh1 and cbh2, the endo-beta-1,4-glucanase-encoding genes egl1 and egl2, and the beta-glucosidase-encoding gene bgl1. The protein is Velvet complex subunit 2 of Hypocrea jecorina (strain QM6a) (Trichoderma reesei).